The following is a 239-amino-acid chain: MKNDVISPEFDENGRPLRRIRSFVRRQGRLTKGQEHALENYWPVMGVEFSEDMLDFPALFGREAPVTLEIGFGMGASLVAMAKDRPEQDFLGIEVHSPGVGACLASAHEEGLSNLRVMCHDAVEVLHKMIPDNSLRMVQLFFPDPWHKARHNKRRIVQVPFAELVKSKLQLGGVFHMATDWEPYAEHMLEVMSSIDGYKNLSESNDYVPRPASRPVTKFEQRGHRLGHGVWDLMFERVK.

4 residues coordinate S-adenosyl-L-methionine: glutamate 69, glutamate 94, aspartate 121, and aspartate 144. Residue aspartate 144 is part of the active site. Lysine 148 contacts substrate. Residues 150–155 (RHNKRR) form an interaction with RNA region. Residues aspartate 180 and 217–220 (TKFE) contribute to the substrate site.

It belongs to the class I-like SAM-binding methyltransferase superfamily. TrmB family. As to quaternary structure, monomer.

It catalyses the reaction guanosine(46) in tRNA + S-adenosyl-L-methionine = N(7)-methylguanosine(46) in tRNA + S-adenosyl-L-homocysteine. It participates in tRNA modification; N(7)-methylguanine-tRNA biosynthesis. Its function is as follows. Catalyzes the formation of N(7)-methylguanine at position 46 (m7G46) in tRNA. The sequence is that of tRNA (guanine-N(7)-)-methyltransferase from Shigella flexneri serotype 5b (strain 8401).